We begin with the raw amino-acid sequence, 632 residues long: Protein EAP1 (632 aa).

Disordered stretches follow at residues 1–80, 149–204, and 248–313; these read MELN…KKNK, MGPP…DDEE, and KSKG…PSLS. Polar residues-rich tracts occupy residues 7–38 and 54–69; these read SIISSSQFSGELSDSDTAAATHKSQQAISNLF and VESSTDSSNISVATSG. Residue Ser30 is modified to Phosphoserine. Ser281 and Ser282 each carry phosphoserine. A compositionally biased stretch (basic and acidic residues) spans 288-298; sequence NLKRQDKKEES. Residues Ser327 and Ser344 each carry the phosphoserine modification. The segment at 347-378 is disordered; sequence SLPSLDNNNQVPSSNVSVVNNDGNSTPHQSGS. Low complexity predominate over residues 353–371; that stretch reads NNNQVPSSNVSVVNNDGNS. The residue at position 387 (Ser387) is a Phosphoserine. Disordered regions lie at residues 429–541 and 587–632; these read QHPP…PPPP and QGNF…KNIK. 440-447 serves as a coordination point for ATP; sequence GLLNKGKS. Residues 474-486 show a composition bias toward pro residues; that stretch reads PNFPQRMMPPPPG. Positions 492–505 are enriched in basic and acidic residues; it reads KDSKDVNKKEDRQL. Polar residues-rich tracts occupy residues 507–516, 590–603, and 610–621; these read QNKNPNGTRN, FPPNFQQGFGSNSP, and INANGKNVTNQL.

In terms of assembly, interacts with SMY2, SYH1 and eIF4E.

Its subcellular location is the cytoplasm. Functionally, can regulate translation through binding to eIF4E. Competes with eIF4G and p20 for binding to eIF4E in vivo and inhibits cap-dependent translation in vitro. Plays a role in cell growth and is implicated in the TOR signaling cascade. Functions independently of eIF4E to maintain genetic stability and to attenuate GCN4 translation upon TOR inactivation. The chain is Protein EAP1 (EAP1) from Saccharomyces cerevisiae (strain ATCC 204508 / S288c) (Baker's yeast).